The sequence spans 511 residues: MVKYMNLIVLGMLMFGVFVTLSLGSSTALTVYSPFPGEHVALINPKELILNISVYDPIAPVNSTVGVTISGPYDIKMTSAGVPVGELNSSHMLTVTDYAFPVTLFEANGTQISAFIPGQYNVTISVAGCSETIPIYVISPNEIEILVCVYSNGVPLPGATVSIYNVTNGELLLTNTTNSQGLAELTVPYVYTMTNEYNVTAVKPGYQLVYKEVTVPADHITPVTVKLTTKPITFVLTPVYFQDMGVIEPAEPAQLPGTPEPVYVASAYMGTTFSIIINATESGMPVQGATISASYLISGKQMSSTATYIGNGQYNLSIVLPNSTVPYDLELVITGTYQTNTYTFITLLSVQPNFYCEIQRLQSEVSVLESEVDQLKVEIQSLNETLTLQASEIASLKTYLEGNVSYFSMQISSLESEIKYLNSTLMTLSSELTTVNSTLTSEVNSLTSEVNSLSTQVSTLSTEVNNLNTTINNDNQKISSLTTLVYGGIILGVIALIIAIVAVVLVFRKVA.

The first 24 residues, 1 to 24, serve as a signal peptide directing secretion; sequence MVKYMNLIVLGMLMFGVFVTLSLG. Positions 358–392 form a coiled coil; that stretch reads IQRLQSEVSVLESEVDQLKVEIQSLNETLTLQASE. The helical transmembrane segment at 487–507 threads the bilayer; it reads GGIILGVIALIIAIVAVVLVF.

This sequence belongs to the Sulfolobales SlaB family. In terms of assembly, the mushroom-shaped unit cells of the Sulfolobales' S-layers may consist of three SlaB subunits and six SlaA subunits.

Its subcellular location is the secreted. It is found in the cell wall. It localises to the S-layer. The protein resides in the cell membrane. Its function is as follows. S-layer small protein. May anchor the complex to the cell membrane. This chain is S-layer protein B, found in Acidianus ambivalens (Desulfurolobus ambivalens).